We begin with the raw amino-acid sequence, 566 residues long: Type 2 DNA topoisomerase 6 subunit B (566 aa).

Residues asparagine 48, aspartate 80, 101–102 (TK), 111–118 (GQQGIGIS), and lysine 475 each bind ATP.

It belongs to the TOP6B family. In terms of assembly, homodimer. Heterotetramer of two Top6A and two Top6B chains.

It catalyses the reaction ATP-dependent breakage, passage and rejoining of double-stranded DNA.. Relaxes both positive and negative superturns and exhibits a strong decatenase activity. The chain is Type 2 DNA topoisomerase 6 subunit B from Thermococcus sibiricus (strain DSM 12597 / MM 739).